Here is a 107-residue protein sequence, read N- to C-terminus: uncharacterized protein (107 aa).

This is an uncharacterized protein from Methanocaldococcus jannaschii (strain ATCC 43067 / DSM 2661 / JAL-1 / JCM 10045 / NBRC 100440) (Methanococcus jannaschii).